The following is a 182-amino-acid chain: D-lyxose ketol-isomerase (182 aa).

His-74, His-76, Glu-87, and His-142 together coordinate Mn(2+).

It belongs to the D-lyxose ketol-isomerase family. Homodimer. Mn(2+) is required as a cofactor.

The catalysed reaction is D-lyxose = D-xylulose. In terms of biological role, sugar isomerase that catalyzes the reversible isomerization of D-lyxose to D-xylulose. Shows weak activity with D-mannose and L-ribose. This Cohnella laeviribosi protein is D-lyxose ketol-isomerase.